The chain runs to 486 residues: Pup--protein ligase (486 aa).

E33 contributes to the Mg(2+) binding site. An ATP-binding site is contributed by R76. Y78 contributes to the Mg(2+) binding site. D80 acts as the Proton acceptor in catalysis. Residue E86 coordinates Mg(2+). 2 residues coordinate ATP: T89 and W451.

It belongs to the Pup ligase/Pup deamidase family. Pup-conjugating enzyme subfamily.

The enzyme catalyses ATP + [prokaryotic ubiquitin-like protein]-L-glutamate + [protein]-L-lysine = ADP + phosphate + N(6)-([prokaryotic ubiquitin-like protein]-gamma-L-glutamyl)-[protein]-L-lysine.. The protein operates within protein degradation; proteasomal Pup-dependent pathway. It participates in protein modification; protein pupylation. Its function is as follows. Catalyzes the covalent attachment of the prokaryotic ubiquitin-like protein modifier Pup to the proteasomal substrate proteins, thereby targeting them for proteasomal degradation. This tagging system is termed pupylation. The ligation reaction involves the side-chain carboxylate of the C-terminal glutamate of Pup and the side-chain amino group of a substrate lysine. This chain is Pup--protein ligase, found in Bifidobacterium longum (strain NCC 2705).